We begin with the raw amino-acid sequence, 591 residues long: Potassium-transporting ATPase potassium-binding subunit (591 aa).

Transmembrane regions (helical) follow at residues 6-26, 63-83, 137-157, 179-199, 272-292, 303-323, 405-425, 444-464, 510-530, and 553-573; these read WFQI…LGVF, WTEY…MLYI, GLAY…IAFI, VLWV…SQGV, LSNL…TYTL, WAVW…VYWA, AGMY…GLMV, AMLV…ISSV, VAIG…MLAI, and LFSV…FFPA.

The protein belongs to the KdpA family. As to quaternary structure, the system is composed of three essential subunits: KdpA, KdpB and KdpC.

The protein resides in the cell inner membrane. In terms of biological role, part of the high-affinity ATP-driven potassium transport (or Kdp) system, which catalyzes the hydrolysis of ATP coupled with the electrogenic transport of potassium into the cytoplasm. This subunit binds the periplasmic potassium ions and delivers the ions to the membrane domain of KdpB through an intramembrane tunnel. This is Potassium-transporting ATPase potassium-binding subunit from Koribacter versatilis (strain Ellin345).